The sequence spans 365 residues: Probable caffeine synthase 4 (365 aa).

Tyrosine 18 is an S-adenosyl-L-homocysteine binding site. Threonine 25 serves as a coordination point for caffeine. S-adenosyl-L-homocysteine is bound by residues cysteine 61, asparagine 66, aspartate 98, leucine 99, serine 134, and phenylalanine 135. Caffeine-binding residues include tyrosine 152, histidine 155, and tryptophan 156. Mg(2+) contacts are provided by asparagine 173, aspartate 259, phenylalanine 261, and asparagine 262. Phenylalanine 317 serves as a coordination point for caffeine.

This sequence belongs to the methyltransferase superfamily. Type-7 methyltransferase family. It depends on Mg(2+) as a cofactor.

It participates in alkaloid biosynthesis. In terms of biological role, may be involved in the biosynthesis of caffeine. In Camellia sinensis (Tea plant), this protein is Probable caffeine synthase 4.